Reading from the N-terminus, the 303-residue chain is Probable 5-dehydro-4-deoxyglucarate dehydratase (303 aa).

Belongs to the DapA family.

It catalyses the reaction 5-dehydro-4-deoxy-D-glucarate + H(+) = 2,5-dioxopentanoate + CO2 + H2O. The protein operates within carbohydrate acid metabolism; D-glucarate degradation; 2,5-dioxopentanoate from D-glucarate: step 2/2. This is Probable 5-dehydro-4-deoxyglucarate dehydratase from Pseudomonas savastanoi pv. phaseolicola (strain 1448A / Race 6) (Pseudomonas syringae pv. phaseolicola (strain 1448A / Race 6)).